A 306-amino-acid chain; its full sequence is Palmitoyl-protein thioesterase ABHD10, mitochondrial (306 aa).

The N-terminal 52 residues, 1 to 52 (MAVARLAAVAAWVPCRSWGCAAVPFGPHRGLSALLARIPQRAPRWLPACRQK), are a transit peptide targeting the mitochondrion. Residues 78 to 177 (IIFIPGYLSY…KVVALLGVAT (100 aa)) enclose the AB hydrolase-1 domain. Active-site charge relay system residues include Ser-152, Asp-249, and His-279.

The protein belongs to the AB hydrolase superfamily.

Its subcellular location is the mitochondrion. It carries out the reaction S-hexadecanoyl-L-cysteinyl-[protein] + H2O = L-cysteinyl-[protein] + hexadecanoate + H(+). It catalyses the reaction mycophenolic acid O-acyl-beta-D-glucuronide + H2O = mycophenolate + D-glucuronate + H(+). Its activity is regulated as follows. Inhibited by palmostatin-B. Acts as an acyl-protein thioesterase that hydrolyzes fatty acids from acylated residues in proteins. Regulates the mitochondrial S-depalmitoylation of the nucleophilic active site residue of peroxiredoxin-5/PRDX5, a key antioxidant protein, therefore modulating mitochondrial antioxidant ability. Also catalyzes the deglucuronidation of mycophenolic acid acyl-glucuronide, an active metabolite of the immunosuppressant drug mycophenolate. The chain is Palmitoyl-protein thioesterase ABHD10, mitochondrial (ABHD10) from Pongo abelii (Sumatran orangutan).